A 340-amino-acid chain; its full sequence is Ferrochelatase (340 aa).

Fe cation is bound by residues His189 and Glu292.

Belongs to the ferrochelatase family.

It localises to the cytoplasm. The catalysed reaction is heme b + 2 H(+) = protoporphyrin IX + Fe(2+). Its pathway is porphyrin-containing compound metabolism; protoheme biosynthesis; protoheme from protoporphyrin-IX: step 1/1. In terms of biological role, catalyzes the ferrous insertion into protoporphyrin IX. The chain is Ferrochelatase from Pseudomonas syringae pv. syringae (strain B728a).